We begin with the raw amino-acid sequence, 477 residues long: tRNA(Ile)-lysidine synthase (477 aa).

An ATP-binding site is contributed by 36–41 (SGGADS).

It belongs to the tRNA(Ile)-lysidine synthase family.

Its subcellular location is the cytoplasm. It catalyses the reaction cytidine(34) in tRNA(Ile2) + L-lysine + ATP = lysidine(34) in tRNA(Ile2) + AMP + diphosphate + H(+). Its function is as follows. Ligates lysine onto the cytidine present at position 34 of the AUA codon-specific tRNA(Ile) that contains the anticodon CAU, in an ATP-dependent manner. Cytidine is converted to lysidine, thus changing the amino acid specificity of the tRNA from methionine to isoleucine. The chain is tRNA(Ile)-lysidine synthase from Treponema pallidum (strain Nichols).